The sequence spans 503 residues: Podocalyxin (503 aa).

The first 21 residues, 1-21, serve as a signal peptide directing secretion; the sequence is MPPTTALSALLLLLLSPASHS. The tract at residues 19 to 236 is disordered; it reads SHSHNGNETS…PLTSQTPGIT (218 aa). Residues 20-50 show a composition bias toward polar residues; that stretch reads HSHNGNETSTSAIKSSTVQSHQSATTSTEVT. At 22–404 the chain is on the extracellular side; sequence HNGNETSTSA…PPEVNEDRFS (383 aa). Asparagine 25, asparagine 89, and asparagine 94 each carry an N-linked (GlcNAc...) asparagine glycan. Residues 61–91 are compositionally biased toward low complexity; that stretch reads STQPSNPTPFTTSTQSPSMPTSTPNPTSNQS. Positions 107–126 are enriched in low complexity; it reads TSSPSSTAFTSSSGQTASSG. Over residues 131–183 the composition is skewed to polar residues; it reads DSFTTAPTTTLGLINVSSQPTDLNTTSKLLSTPTTDNTTSPQQPVDSSPSTAS. Residues asparagine 145, asparagine 154, asparagine 167, and asparagine 206 are each glycosylated (N-linked (GlcNAc...) asparagine). A compositionally biased stretch (low complexity) spans 196-208; that stretch reads SSSGSTPSTDNST. The span at 222–236 shows a compositional bias: polar residues; sequence SEATQPLTSQTPGIT. N-linked (GlcNAc...) asparagine glycosylation occurs at asparagine 303. Residues 405–425 traverse the membrane as a helical segment; that stretch reads LPLIITIVCMASFLLLVAALY. Residues 426–503 are Cytoplasmic-facing; the sequence is GCCHQRISQR…DLDEEEDTHL (78 aa). Residue threonine 463 is modified to Phosphothreonine. Serine 482 is subject to Phosphoserine. Threonine 501 carries the phosphothreonine modification.

It belongs to the podocalyxin family. In terms of assembly, monomer; when associated with the membrane raft. Oligomer; when integrated in the apical membrane. Found in a complex with EZR, PODXL and NHERF2. Associates with the actin cytoskeleton through complex formation with EZR and NHERF2. Interacts (via the C-terminal PDZ-binding motif DTHL) with NHERF1 (via the PDZ domains); interaction is not detected in glomerular epithelium cells, take place early in the secretory pathway and is necessary for its apical membrane sorting. Interacts (via the C-terminal PDZ-binding motif DTHL) with NHERF2 (via the PDZ 1 domain); interaction is detected in glomerular epithelium cells. Interacts with EZR. N- and O-linked glycosylated. Sialoglycoprotein. As to expression, expressed in liver cells and hematopoietic cells (at protein level). Glomerular epithelium cell (podocyte).

The protein resides in the apical cell membrane. It localises to the cell projection. It is found in the microvillus. The protein localises to the membrane raft. Its subcellular location is the lamellipodium. The protein resides in the filopodium. It localises to the ruffle. It is found in the membrane. Functionally, involved in the regulation of both adhesion and cell morphology and cancer progression. Functions as an anti-adhesive molecule that maintains an open filtration pathway between neighboring foot processes in the podocyte by charge repulsion. Acts as a pro-adhesive molecule, enhancing the adherence of cells to immobilized ligands, increasing the rate of migration and cell-cell contacts in an integrin-dependent manner. Induces the formation of apical actin-dependent microvilli. Involved in the formation of a preapical plasma membrane subdomain to set up initial epithelial polarization and the apical lumen formation during renal tubulogenesis. Plays a role in cancer development and aggressiveness by inducing cell migration and invasion through its interaction with the actin-binding protein EZR. Affects EZR-dependent signaling events, leading to increased activities of the MAPK and PI3K pathways in cancer cells. The sequence is that of Podocalyxin (Podxl) from Mus musculus (Mouse).